A 139-amino-acid chain; its full sequence is Small ribosomal subunit protein bS6 (139 aa).

Basic and acidic residues predominate over residues 114–133 (KKEPREPRAPREPRVEKVDE). The disordered stretch occupies residues 114-139 (KKEPREPRAPREPRVEKVDEQTFTEE).

It belongs to the bacterial ribosomal protein bS6 family.

In terms of biological role, binds together with bS18 to 16S ribosomal RNA. The protein is Small ribosomal subunit protein bS6 of Campylobacter concisus (strain 13826).